Consider the following 285-residue polypeptide: Phycobilisome 31.6 kDa linker polypeptide, phycocyanin-associated, rod (285 aa).

Residues 1 to 180 (MPITTAASRL…LYRGYATSDR (180 aa)) enclose the PBS-linker domain.

It belongs to the phycobilisome linker protein family.

Its subcellular location is the cellular thylakoid membrane. In terms of biological role, rod linker protein, associated with phycocyanin. Linker polypeptides determine the state of aggregation and the location of the disk-shaped phycobiliprotein units within the phycobilisome and modulate their spectroscopic properties in order to mediate a directed and optimal energy transfer. The sequence is that of Phycobilisome 31.6 kDa linker polypeptide, phycocyanin-associated, rod (cpcI3) from Microchaete diplosiphon (Fremyella diplosiphon).